Here is a 504-residue protein sequence, read N- to C-terminus: MVTELANLKSISKSFGGIHALRSVNFDVRPGEVHALLGENGAGKSTLMRVLGGEIIPSQGEVVINGKRTELRDPRDARALGIVVIHQELALAPDLSVAENIFLGELPTLISRFSLRRRAKQLIDRLGFDIDPGRLVGTLSVAHQQVVEIAKALSQDIKIIVFDEPTAVLGAQDAMKLHQIIRGLRDRGVGIVYISHRLDEVFDIADRMTVMKDGETVGTVATTDVKIDDIIRMMVGRPIANMFPERSQRTIGAELLNVKKLNAGRMVRDVSFSVRAGEIVGLGGLIGSGRTEVARAIFGADPLDSGTISLKGKALKLKSPRDAVKAGIGLVPEDRKEHGVVIDKPIRVNATMARMSSVVNALGFLKPALERTDVTALGKSLRLKASSIDAPVSSLSGGNQQKVVLAKWFHAGGDVIILDEPTRGVDVGAKAEIYALINKLAEDGKAVLVISSEHQELFGLCDRVLAMGQGQIRGELTPSNYSEENLLGLSMMGGARASNQGSQV.

ABC transporter domains lie at 6-238 (ANLK…VGRP) and 251-494 (IGAE…MMGG). An ATP-binding site is contributed by 38-45 (GENGAGKS).

The protein belongs to the ABC transporter superfamily. Ribose importer (TC 3.A.1.2.1) family. As to quaternary structure, the complex is composed of an ATP-binding protein (RbsA), two transmembrane proteins (RbsC) and a solute-binding protein (RbsB).

Its subcellular location is the cell inner membrane. The enzyme catalyses D-ribose(out) + ATP + H2O = D-ribose(in) + ADP + phosphate + H(+). Functionally, part of the ABC transporter complex RbsABC involved in ribose import. Responsible for energy coupling to the transport system. This chain is Ribose import ATP-binding protein RbsA 3, found in Rhizobium meliloti (strain 1021) (Ensifer meliloti).